Reading from the N-terminus, the 555-residue chain is Spermine oxidase (555 aa).

FAD-binding positions include Ala-35, Glu-55, Arg-63, 79 to 80 (TW), and Val-261. The disordered stretch occupies residues 271 to 307 (AHPRGPEIEPRGEGDHNHDTGEGGQSGENPQQGRWDE). Residues 274–291 (RGPEIEPRGEGDHNHDTG) are compositionally biased toward basic and acidic residues. FAD contacts are provided by residues Glu-519 and 528-529 (TT).

Belongs to the flavin monoamine oxidase family. FAD serves as cofactor. In terms of tissue distribution, widely expressed. Isoform 1 and isoform 2 are expressed at higher level in brain and skeletal muscle. Isoform 7 is found in brain and spleen, isoform 10 is widely expressed but found at lower level in heart, kidney, liver and lung.

Its subcellular location is the cytoplasm. The protein localises to the nucleus. The catalysed reaction is spermine + O2 + H2O = 3-aminopropanal + spermidine + H2O2. The protein operates within amine and polyamine degradation; spermine degradation. Functionally, flavoenzyme which catalyzes the oxidation of spermine to spermidine. Can also use N(1)-acetylspermine and spermidine as substrates, with different affinity depending on the isoform (isozyme) and on the experimental conditions. Plays an important role in the regulation of polyamine intracellular concentration and has the potential to act as a determinant of cellular sensitivity to the antitumor polyamine analogs. May contribute to beta-alanine production via aldehyde dehydrogenase conversion of 3-amino-propanal. The chain is Spermine oxidase (Smox) from Mus musculus (Mouse).